Here is a 138-residue protein sequence, read N- to C-terminus: Transcription antitermination protein NusB (138 aa).

The protein belongs to the NusB family.

In terms of biological role, involved in transcription antitermination. Required for transcription of ribosomal RNA (rRNA) genes. Binds specifically to the boxA antiterminator sequence of the ribosomal RNA (rrn) operons. In Helicobacter acinonychis (strain Sheeba), this protein is Transcription antitermination protein NusB.